Consider the following 72-residue polypeptide: Translation initiation factor IF-1 2 (72 aa).

Residues 1-72 (MAKDDVIQMQ…SRARIVFRTK (72 aa)) enclose the S1-like domain.

This sequence belongs to the IF-1 family. In terms of assembly, component of the 30S ribosomal translation pre-initiation complex which assembles on the 30S ribosome in the order IF-2 and IF-3, IF-1 and N-formylmethionyl-tRNA(fMet); mRNA recruitment can occur at any time during PIC assembly.

The protein localises to the cytoplasm. Functionally, one of the essential components for the initiation of protein synthesis. Stabilizes the binding of IF-2 and IF-3 on the 30S subunit to which N-formylmethionyl-tRNA(fMet) subsequently binds. Helps modulate mRNA selection, yielding the 30S pre-initiation complex (PIC). Upon addition of the 50S ribosomal subunit IF-1, IF-2 and IF-3 are released leaving the mature 70S translation initiation complex. This Cupriavidus metallidurans (strain ATCC 43123 / DSM 2839 / NBRC 102507 / CH34) (Ralstonia metallidurans) protein is Translation initiation factor IF-1 2.